The sequence spans 44 residues: Photosystem II reaction center protein K (44 aa).

A propeptide spanning residues 1-7 is cleaved from the precursor; sequence MTTLLLA. Residues 19–39 traverse the membrane as a helical segment; the sequence is IVDVLPVIPLLFLLLAFVWQA.

Belongs to the PsbK family. In terms of assembly, PSII is composed of 1 copy each of membrane proteins PsbA, PsbB, PsbC, PsbD, PsbE, PsbF, PsbH, PsbI, PsbJ, PsbK, PsbL, PsbM, PsbT, PsbX, PsbY, PsbZ, Psb30/Ycf12, at least 3 peripheral proteins of the oxygen-evolving complex and a large number of cofactors. It forms dimeric complexes.

The protein localises to the plastid. It localises to the chloroplast thylakoid membrane. In terms of biological role, one of the components of the core complex of photosystem II (PSII). PSII is a light-driven water:plastoquinone oxidoreductase that uses light energy to abstract electrons from H(2)O, generating O(2) and a proton gradient subsequently used for ATP formation. It consists of a core antenna complex that captures photons, and an electron transfer chain that converts photonic excitation into a charge separation. The protein is Photosystem II reaction center protein K of Tupiella akineta (Green alga).